The chain runs to 83 residues: Mu-theraphotoxin-Hhn2e (83 aa).

Residues 1–21 (MKASMFLALAGLVLLFVVGYA) form the signal peptide. The propeptide occupies 22–48 (SESEEKEFPRELLSKIFAVDDFKGEER). Intrachain disulfides connect Cys50/Cys65, Cys57/Cys70, and Cys64/Cys77. At Leu81 the chain carries Leucine amide.

This sequence belongs to the neurotoxin 10 (Hwtx-1) family. 15 (Hntx-3) subfamily. Monomer. In terms of tissue distribution, expressed by the venom gland.

The protein resides in the secreted. Functionally, lethal neurotoxin. Selectively blocks tetrodotoxin-sensitive voltage-gated sodium channels (Nav). Does not affect tetrodotoxin-resistant voltage-gated sodium channels or calcium channels. This Cyriopagopus hainanus (Chinese bird spider) protein is Mu-theraphotoxin-Hhn2e.